The sequence spans 147 residues: Endoribonuclease YbeY (147 aa).

The Zn(2+) site is built by His-109, His-113, and His-119.

The protein belongs to the endoribonuclease YbeY family. Requires Zn(2+) as cofactor.

It is found in the cytoplasm. Its function is as follows. Single strand-specific metallo-endoribonuclease involved in late-stage 70S ribosome quality control and in maturation of the 3' terminus of the 16S rRNA. This chain is Endoribonuclease YbeY, found in Thiobacillus denitrificans (strain ATCC 25259 / T1).